Here is a 122-residue protein sequence, read N- to C-terminus: Class I hydrophobin 2 (122 aa).

A signal peptide spans methionine 1–alanine 22. 4 disulfides stabilise this stretch: cysteine 40–cysteine 101, cysteine 47–cysteine 95, cysteine 48–cysteine 81, and cysteine 102–cysteine 115.

This sequence belongs to the fungal hydrophobin family. As to quaternary structure, self-assembles to form functional amyloid fibrils called rodlets. Self-assembly into fibrillar rodlets occurs spontaneously at hydrophobic:hydrophilic interfaces and the rodlets further associate laterally to form amphipathic monolayers.

It localises to the secreted. The protein resides in the cell wall. Its function is as follows. Aerial growth, conidiation, and dispersal of filamentous fungi in the environment rely upon a capability of their secreting small amphipathic proteins called hydrophobins (HPBs) with low sequence identity. Class I can self-assemble into an outermost layer of rodlet bundles on aerial cell surfaces, conferring cellular hydrophobicity that supports fungal growth, development and dispersal; whereas Class II form highly ordered films at water-air interfaces through intermolecular interactions but contribute nothing to the rodlet structure. Hah2 is a class I hydrophobin that is involved in aerial growth of mycelia, but does not play a role in pathogenesis. The polypeptide is Class I hydrophobin 2 (Heterobasidion annosum (Root rot fungus)).